The sequence spans 573 residues: Potassium-transporting ATPase potassium-binding subunit (573 aa).

Helical transmembrane passes span 6–26 (ILFALFIVTIALITKPLGSYI), 66–86 (FFSLVSFSVMAFIFVLVILLL), 135–155 (ALAVQNFVSAAVGLCVAIALI), 177–197 (VFWILLPISIVIAIVYIFQGV), 257–277 (IQMVSIFAIAAALTYTFGKWV), 283–303 (GWLIFGVMLVLFIISLVVMTI), 382–402 (IFGGVGAGFYGFFMFLMLAVF), 428–448 (MFALLIFPCCVLVFTGLAAVI), 493–513 (ITIALSMLIGRFGVIFAVIML), and 537–557 (FIFAILVFFTILLIGGLTIFP).

This sequence belongs to the KdpA family. In terms of assembly, the system is composed of three essential subunits: KdpA, KdpB and KdpC.

The protein localises to the cell inner membrane. Its function is as follows. Part of the high-affinity ATP-driven potassium transport (or Kdp) system, which catalyzes the hydrolysis of ATP coupled with the electrogenic transport of potassium into the cytoplasm. This subunit binds the periplasmic potassium ions and delivers the ions to the membrane domain of KdpB through an intramembrane tunnel. The protein is Potassium-transporting ATPase potassium-binding subunit of Francisella tularensis subsp. holarctica (strain FTNF002-00 / FTA).